The chain runs to 398 residues: Acetate kinase 1 (398 aa).

Asparagine 9 contributes to the Mg(2+) binding site. Lysine 16 is an ATP binding site. Arginine 89 serves as a coordination point for substrate. Aspartate 146 serves as the catalytic Proton donor/acceptor. Residues 206–210 (HLGNG), 281–283 (DCR), and 329–333 (GIGEN) each bind ATP. A Mg(2+)-binding site is contributed by glutamate 384.

The protein belongs to the acetokinase family. Homodimer. It depends on Mg(2+) as a cofactor. Requires Mn(2+) as cofactor.

The protein resides in the cytoplasm. It carries out the reaction acetate + ATP = acetyl phosphate + ADP. It functions in the pathway metabolic intermediate biosynthesis; acetyl-CoA biosynthesis; acetyl-CoA from acetate: step 1/2. In terms of biological role, catalyzes the formation of acetyl phosphate from acetate and ATP. Can also catalyze the reverse reaction. The protein is Acetate kinase 1 of Photobacterium profundum (strain SS9).